The following is a 921-amino-acid chain: Protein translocase subunit SecA (921 aa).

ATP is bound by residues Gln86, Gly104–Thr108, and Asp497. The span at Gln829–Gln838 shows a compositional bias: low complexity. A disordered region spans residues Gln829–Ala921. The span at Val839–Pro855 shows a compositional bias: pro residues. The Zn(2+) site is built by Cys901, Cys903, Cys912, and His913.

Belongs to the SecA family. Monomer and homodimer. Part of the essential Sec protein translocation apparatus which comprises SecA, SecYEG and auxiliary proteins SecDF-YajC and YidC. It depends on Zn(2+) as a cofactor.

It localises to the cell inner membrane. The protein localises to the cytoplasm. The catalysed reaction is ATP + H2O + cellular proteinSide 1 = ADP + phosphate + cellular proteinSide 2.. Its function is as follows. Part of the Sec protein translocase complex. Interacts with the SecYEG preprotein conducting channel. Has a central role in coupling the hydrolysis of ATP to the transfer of proteins into and across the cell membrane, serving both as a receptor for the preprotein-SecB complex and as an ATP-driven molecular motor driving the stepwise translocation of polypeptide chains across the membrane. This is Protein translocase subunit SecA from Hyphomonas neptunium (strain ATCC 15444).